A 173-amino-acid polypeptide reads, in one-letter code: NADH-ubiquinone oxidoreductase chain 6 (173 aa).

Transmembrane regions (helical) follow at residues 1–21, 27–47, 48–68, 87–107, 113–133, and 139–159; these read MTYF…AVAS, YGVV…LSLG, VSFV…VVFV, VVGY…VGGF, FGVV…FSGV, and CGVG…FVVL.

Belongs to the complex I subunit 6 family.

It localises to the mitochondrion membrane. It catalyses the reaction a ubiquinone + NADH + 5 H(+)(in) = a ubiquinol + NAD(+) + 4 H(+)(out). Functionally, core subunit of the mitochondrial membrane respiratory chain NADH dehydrogenase (Complex I) that is believed to belong to the minimal assembly required for catalysis. Complex I functions in the transfer of electrons from NADH to the respiratory chain. The immediate electron acceptor for the enzyme is believed to be ubiquinone. This chain is NADH-ubiquinone oxidoreductase chain 6 (MT-ND6), found in Cepphus grylle (Black guillemot).